A 397-amino-acid polypeptide reads, in one-letter code: Elongation factor Tu (397 aa).

The region spanning 10-207 (KPHVNIGTIG…ACDSYIPEPQ (198 aa)) is the tr-type G domain. Residues 19–26 (GHIDHGKT) form a G1 region. 19-26 (GHIDHGKT) contacts GTP. Position 26 (threonine 26) interacts with Mg(2+). The interval 60 to 64 (GITIA) is G2. Residues 81-84 (DCPG) form a G3 region. GTP-binding positions include 81 to 85 (DCPGH) and 136 to 139 (NKCD). Residues 136–139 (NKCD) are G4. The G5 stretch occupies residues 174–176 (SAL).

This sequence belongs to the TRAFAC class translation factor GTPase superfamily. Classic translation factor GTPase family. EF-Tu/EF-1A subfamily. Monomer.

The protein localises to the cytoplasm. The enzyme catalyses GTP + H2O = GDP + phosphate + H(+). GTP hydrolase that promotes the GTP-dependent binding of aminoacyl-tRNA to the A-site of ribosomes during protein biosynthesis. The sequence is that of Elongation factor Tu from Nitratidesulfovibrio vulgaris (strain ATCC 29579 / DSM 644 / CCUG 34227 / NCIMB 8303 / VKM B-1760 / Hildenborough) (Desulfovibrio vulgaris).